The chain runs to 224 residues: Ribonuclease HII (224 aa).

One can recognise an RNase H type-2 domain in the interval 33–224; the sequence is FHVAGVDEVG…LKERYRNDVS (192 aa). Residues aspartate 39, glutamate 40, and aspartate 131 each contribute to the a divalent metal cation site.

This sequence belongs to the RNase HII family. It depends on Mn(2+) as a cofactor. Mg(2+) is required as a cofactor.

Its subcellular location is the cytoplasm. It carries out the reaction Endonucleolytic cleavage to 5'-phosphomonoester.. Its function is as follows. Endonuclease that specifically degrades the RNA of RNA-DNA hybrids. The protein is Ribonuclease HII of Bartonella tribocorum (strain CIP 105476 / IBS 506).